We begin with the raw amino-acid sequence, 218 residues long: uncharacterized protein (218 aa).

Residues 1–24 (MAAQPQAPSAGGRPRAGKAVKSVA) are disordered. Residues 28 to 88 (KLSRESIVEG…AVRIRVIDDI (61 aa)) form the HTH tetR-type domain. A DNA-binding region (H-T-H motif) is located at residues 51-70 (TINALATQLGTKGPSLYNHV). Thr57 is subject to Phosphothreonine; by PknH.

In terms of processing, phosphorylated on Thr-57 by PknH.

This is an uncharacterized protein from Mycobacterium tuberculosis (strain ATCC 25618 / H37Rv).